The chain runs to 192 residues: MKRYVVGISGASGVILAVKLIKELVNAKHQVEVIISPSGRKTLYYELGCQSFDALFSEENLEYIHTHSIQAIESSLASGSCPVEATIIIPCSMTTVAAISIGLADNLLRRVADVALKERRPLILVPRETPLHTIHLENLLKLSKSGATIFPPMPMWYFKPQSVEDLENALVGKILAYLNIPSDLTKQWSNPE.

Residues 10–12 (GAS), serine 36, 92–95 (SMTT), and arginine 127 contribute to the FMN site. The dimethylallyl phosphate site is built by tyrosine 157 and lysine 173.

Belongs to the UbiX/PAD1 family.

It carries out the reaction dimethylallyl phosphate + FMNH2 = prenylated FMNH2 + phosphate. Flavin prenyltransferase that catalyzes the synthesis of the prenylated FMN cofactor (prenyl-FMN) for 4-hydroxy-3-polyprenylbenzoic acid decarboxylase UbiD. The prenyltransferase is metal-independent and links a dimethylallyl moiety from dimethylallyl monophosphate (DMAP) to the flavin N5 and C6 atoms of FMN. The sequence is that of Flavin prenyltransferase UbiX from Chlamydia pneumoniae (Chlamydophila pneumoniae).